We begin with the raw amino-acid sequence, 229 residues long: Putative N-acetylmannosamine-6-phosphate 2-epimerase (229 aa).

The protein belongs to the NanE family.

The catalysed reaction is an N-acyl-D-glucosamine 6-phosphate = an N-acyl-D-mannosamine 6-phosphate. It functions in the pathway amino-sugar metabolism; N-acetylneuraminate degradation; D-fructose 6-phosphate from N-acetylneuraminate: step 3/5. Functionally, converts N-acetylmannosamine-6-phosphate (ManNAc-6-P) to N-acetylglucosamine-6-phosphate (GlcNAc-6-P). The protein is Putative N-acetylmannosamine-6-phosphate 2-epimerase of Shigella sonnei (strain Ss046).